We begin with the raw amino-acid sequence, 253 residues long: Imidazole glycerol phosphate synthase subunit HisF (253 aa).

Residues D11 and D130 contribute to the active site.

The protein belongs to the HisA/HisF family. As to quaternary structure, heterodimer of HisH and HisF.

It localises to the cytoplasm. The catalysed reaction is 5-[(5-phospho-1-deoxy-D-ribulos-1-ylimino)methylamino]-1-(5-phospho-beta-D-ribosyl)imidazole-4-carboxamide + L-glutamine = D-erythro-1-(imidazol-4-yl)glycerol 3-phosphate + 5-amino-1-(5-phospho-beta-D-ribosyl)imidazole-4-carboxamide + L-glutamate + H(+). The protein operates within amino-acid biosynthesis; L-histidine biosynthesis; L-histidine from 5-phospho-alpha-D-ribose 1-diphosphate: step 5/9. In terms of biological role, IGPS catalyzes the conversion of PRFAR and glutamine to IGP, AICAR and glutamate. The HisF subunit catalyzes the cyclization activity that produces IGP and AICAR from PRFAR using the ammonia provided by the HisH subunit. This Clostridium botulinum (strain Langeland / NCTC 10281 / Type F) protein is Imidazole glycerol phosphate synthase subunit HisF.